Reading from the N-terminus, the 376-residue chain is Carbapenem antibiotics biosynthesis protein CarD (376 aa).

This sequence belongs to the proline oxidase family.

The protein operates within antibiotic biosynthesis; carbapenem biosynthesis. This is Carbapenem antibiotics biosynthesis protein CarD (carD) from Pectobacterium carotovorum subsp. carotovorum (Erwinia carotovora subsp. carotovora).